Consider the following 138-residue polypeptide: Putative pre-16S rRNA nuclease (138 aa).

This sequence belongs to the YqgF nuclease family.

The protein resides in the cytoplasm. Functionally, could be a nuclease involved in processing of the 5'-end of pre-16S rRNA. This Salmonella arizonae (strain ATCC BAA-731 / CDC346-86 / RSK2980) protein is Putative pre-16S rRNA nuclease.